Here is a 312-residue protein sequence, read N- to C-terminus: Dihydroorotate dehydrogenase B (NAD(+)), catalytic subunit (312 aa).

FMN is bound by residues serine 23 and 47–48 (KA). Residues lysine 47 and 71-75 (NAIGL) each bind substrate. Asparagine 103 and asparagine 131 together coordinate FMN. Asparagine 131 contacts substrate. Cysteine 134 (nucleophile) is an active-site residue. Residues lysine 171 and isoleucine 197 each coordinate FMN. 198–199 (NT) serves as a coordination point for substrate. FMN contacts are provided by residues glycine 223, 249 to 250 (GG), and 271 to 272 (GT).

It belongs to the dihydroorotate dehydrogenase family. Type 1 subfamily. As to quaternary structure, heterotetramer of 2 PyrK and 2 PyrD type B subunits. FMN serves as cofactor.

It is found in the cytoplasm. The enzyme catalyses (S)-dihydroorotate + NAD(+) = orotate + NADH + H(+). Its pathway is pyrimidine metabolism; UMP biosynthesis via de novo pathway; orotate from (S)-dihydroorotate (NAD(+) route): step 1/1. In terms of biological role, catalyzes the conversion of dihydroorotate to orotate with NAD(+) as electron acceptor. This Streptococcus pneumoniae serotype 4 (strain ATCC BAA-334 / TIGR4) protein is Dihydroorotate dehydrogenase B (NAD(+)), catalytic subunit (pyrDB).